Consider the following 313-residue polypeptide: Ribosomal RNA small subunit methyltransferase H (313 aa).

Residues 37–39 (GGH), Asp-57, Phe-83, Asp-104, and Gln-111 each bind S-adenosyl-L-methionine.

The protein belongs to the methyltransferase superfamily. RsmH family.

The protein resides in the cytoplasm. It catalyses the reaction cytidine(1402) in 16S rRNA + S-adenosyl-L-methionine = N(4)-methylcytidine(1402) in 16S rRNA + S-adenosyl-L-homocysteine + H(+). In terms of biological role, specifically methylates the N4 position of cytidine in position 1402 (C1402) of 16S rRNA. The sequence is that of Ribosomal RNA small subunit methyltransferase H from Mycoplasmoides gallisepticum (strain R(low / passage 15 / clone 2)) (Mycoplasma gallisepticum).